We begin with the raw amino-acid sequence, 249 residues long: Enolase-phosphatase E1 (249 aa).

The Mg(2+) site is built by Asp-14 and Glu-16. Residues 141–142 (SS) and Lys-175 contribute to the substrate site. Asp-200 contributes to the Mg(2+) binding site.

Belongs to the HAD-like hydrolase superfamily. MasA/MtnC family. In terms of assembly, monomer. Mg(2+) serves as cofactor.

Its subcellular location is the cytoplasm. It localises to the nucleus. The catalysed reaction is 5-methylsulfanyl-2,3-dioxopentyl phosphate + H2O = 1,2-dihydroxy-5-(methylsulfanyl)pent-1-en-3-one + phosphate. Its pathway is amino-acid biosynthesis; L-methionine biosynthesis via salvage pathway; L-methionine from S-methyl-5-thio-alpha-D-ribose 1-phosphate: step 3/6. It functions in the pathway amino-acid biosynthesis; L-methionine biosynthesis via salvage pathway; L-methionine from S-methyl-5-thio-alpha-D-ribose 1-phosphate: step 4/6. Its function is as follows. Bifunctional enzyme that catalyzes the enolization of 2,3-diketo-5-methylthiopentyl-1-phosphate (DK-MTP-1-P) into the intermediate 2-hydroxy-3-keto-5-methylthiopentenyl-1-phosphate (HK-MTPenyl-1-P), which is then dephosphorylated to form the acireductone 1,2-dihydroxy-3-keto-5-methylthiopentene (DHK-MTPene). This chain is Enolase-phosphatase E1, found in Drosophila mojavensis (Fruit fly).